A 289-amino-acid chain; its full sequence is Arabinogalactan O-methyltransferase 1 (289 aa).

The chain crosses the membrane as a helical span at residues isoleucine 12–isoleucine 32.

The protein belongs to the methyltransferase superfamily. As to quaternary structure, binds to the translation initiation factors TIF3E1.

Its subcellular location is the golgi apparatus membrane. Functionally, involved in the methylation of glucuronic acid of different plant cell wall component, but mainly on side chains of arabinogalactans. This chain is Arabinogalactan O-methyltransferase 1 (AGM1), found in Arabidopsis thaliana (Mouse-ear cress).